A 1962-amino-acid polypeptide reads, in one-letter code: MEFPFGSLETTNFRRFTPESLVEIEKRIAAKQAAKKAKGKHREQKDQEEKPRPQLDLKACNQPPKFYGELPAELVGEPLEDLDPFYSTHRTFMVLDKGRTISRFSATRALWLFSPFNLIRRTAIKVSVHSWFSLFITVTILVNCVGMTQTELPDRIEYVFTVIYTFEALIKILARGFCLNEFAYLRDPWDWLDFSVITLAYIGEATALRGISGLRTFRVLRALKTVSVIPGLKVIVGALIHSVRKLADVTILTVFCLSVFALVGLQLFKGNLKNKCVKNCAALNETGNYSSYGKQEWNFCHRDEDFYYNKPGTSDPLLCGNGSDAGHCPKGYLCLKTSDNPDFNYTSFDSFAWAFLSLFRLMTQDSWERLYQQTLRASGKMYMVFFVLVIFLGSFYLVNLILAVVTMAYEEQNQATIDEIEAKEKTFQETLEMPRKEQEVLAALGIDTASLHSCNGSPLPSKNASERMRRMKPRVSEGSTDDNKSPQSDPYNQRRMSFLGLTSGRRRASHGSVFHFRTPCLDTSFPDGVTDDGVFPGDRESHRGSLLLGGGTSQQGPLLRSPLPQPPNPGSGHGEDGHSTLPTGELAPGGIEVSAFDAGQKKTFLSAEYLNEPFRAQRAMSVVSIMTSVLEELEESERRCPPCLTSFAQKYLIWECCPTWVKLKTVLFGIVTDPFAELTTTLCIVVNTVFMAMEHHGMSSAFEAMLQIGNIVFTVFFTAEMVFKIIAFDPYYYFQKRWNIFDCIIVTVSLIELGAARKGSLSVLRTFRLLRVFKLAKSWPTLNTLIKIIGNSVGALGNLTIILAIIVFVFALVGKQLLGENYRDNRRNISAPNEEWPRWHMHDFFHSFLIVFRILCGEWIENMWACMEVGQKSICLILFLTVMVLGNLVVLNLFTALLLNSFSADNLATPDEDGEVNNLQVALARIQAFGHRTKKAICNFFTRPCLLPWPKAEPQLVVKLPLSSSKAENHIAANAAVGSPGGLSVSRGLRDDHSDFITNPNIWVSVPIAEGESDLDDLEEDGEEDSQSSQQEVILQGQEQLQVETCEGHTAPRSPGSGMSSEDLASYVDEKWKDEAVAQAPAEGGDDSSSSGGSTVDCLDPEEILRKIPELADDLEEPDDCFTEGCLRRCPCCKVDISKFPWTVGWQVRKTCYRIVEHSWFESFIIFMILLSSGSLAFEDYHLDQKPTVKALLEYTDRMFTFIFVLEMLLKWVAYGFKKYFTNAWCWLDFLIVNISLISLIAKILQYSDVASIKALRTLRALRPLRALSRFEGMRVVVDALVGAIPSIMNVLLVCLIFWLIFSTMGVNFFAGKFGRCINKTNEYFSLVPLSIVNNISDCKYQNHTGSFFWVNVKVNFDNVAMGYLALLQVATFKGWMDIMYAAVDARDVNLQPKWEDNVYMYLYFVIFIIFGGFFTLNLFVGVIIDNFNQQKKKLGGQDIFMTEEQKKYYNAMKKLGSKKPQKPIPRPLNKYQGFVFDIVTKQAFDIVIMVLICLNMITMMVETDEQSAEKTKILNKINQFFVAVFTGECVMKMFALRHYYFTNGWNVFDFIVVVLSIGSLVFSVILTSLENYFSPTLFRVIRLARIGRILRLIRAAKGIRTLLFALMMSLPALFNIGLLLFLVMFIYSIFGMASFPHVSWEAGIDDMFNFQTFANSMLCLFQITTSAGWDGLLSPILNTGPPYCDPNLPNSNGSRGNCGSPAVGILFFTTYIIISFLIVVNMYIAVILENFNVATQESSEPLSEDDFDMFYETWEKFDPEATQFITFSALSDFADTLSGPLRIPKPNQNILIQMDLPLVPGDKIHCLDILFAFTKNVLGESGELDSLKANIEEKFMATNVSKASYEPIATTLRWKQEDISATVIQKAYRSYVLHRSMTISNPPAVPRAEEAVPPPDEAFVEFMVNENCALPDKSETASAASFPPSYDSVTRGLSDQINMSTSSSMQNEDEGTSKKVTAPGP.

Residues 1–125 (MEFPFGSLET…FNLIRRTAIK (125 aa)) lie on the Cytoplasmic side of the membrane. Residues 32–56 (QAAKKAKGKHREQKDQEEKPRPQLD) are disordered. The span at 33–42 (AAKKAKGKHR) shows a compositional bias: basic residues. Positions 43–55 (EQKDQEEKPRPQL) are enriched in basic and acidic residues. Residues 116-414 (FNLIRRTAIK…VTMAYEEQNQ (299 aa)) form an I repeat. The chain crosses the membrane as a helical span at residues 126–149 (VSVHSWFSLFITVTILVNCVGMTQ). Residues 150-154 (TELPD) lie on the Extracellular side of the membrane. The chain crosses the membrane as a helical span at residues 155–174 (RIEYVFTVIYTFEALIKILA). The Cytoplasmic segment spans residues 175-187 (RGFCLNEFAYLRD). A helical membrane pass occupies residues 188-206 (PWDWLDFSVITLAYIGEAT). Residues 207-212 (ALRGIS) are Extracellular-facing. The helical; Voltage-sensor transmembrane segment at 213–232 (GLRTFRVLRALKTVSVIPGL) threads the bilayer. Topologically, residues 233 to 248 (KVIVGALIHSVRKLAD) are cytoplasmic. Residues 249–272 (VTILTVFCLSVFALVGLQLFKGNL) form a helical membrane-spanning segment. The Extracellular segment spans residues 273–350 (KNKCVKNCAA…PDFNYTSFDS (78 aa)). Cys276 and Cys328 are oxidised to a cystine. Residues Asn284, Asn288, Asn321, and Asn344 are each glycosylated (N-linked (GlcNAc...) asparagine). Residues 351 to 375 (FAWAFLSLFRLMTQDSWERLYQQTL) constitute an intramembrane region (pore-forming). The Extracellular portion of the chain corresponds to 376 to 382 (RASGKMY). A helical membrane pass occupies residues 383–408 (MVFFVLVIFLGSFYLVNLILAVVTMA). Topologically, residues 409 to 668 (YEEQNQATID…TWVKLKTVLF (260 aa)) are cytoplasmic. Phosphoserine occurs at positions 450, 453, 476, and 488. Residues 452–463 (HSCNGSPLPSKN) show a composition bias toward polar residues. Disordered regions lie at residues 452–493 (HSCN…PYNQ) and 521–586 (LDTS…TGEL). Residues Ser621 and Ser624 each carry the phosphoserine modification. The II repeat unit spans residues 656-920 (CCPTWVKLKT…DEDGEVNNLQ (265 aa)). Residues 669–693 (GIVTDPFAELTTTLCIVVNTVFMAM) form a helical membrane-spanning segment. Topologically, residues 694–704 (EHHGMSSAFEA) are extracellular. Residues 705–728 (MLQIGNIVFTVFFTAEMVFKIIAF) form a helical membrane-spanning segment. At 729 to 736 (DPYYYFQK) the chain is on the cytoplasmic side. Residues 737–756 (RWNIFDCIIVTVSLIELGAA) traverse the membrane as a helical segment. At 757-762 (RKGSLS) the chain is on the extracellular side. Residues 763–782 (VLRTFRLLRVFKLAKSWPTL) form a helical; Voltage-sensor membrane-spanning segment. The Cytoplasmic portion of the chain corresponds to 783–798 (NTLIKIIGNSVGALGN). A helical membrane pass occupies residues 799–819 (LTIILAIIVFVFALVGKQLLG). Over 820–843 (ENYRDNRRNISAPNEEWPRWHMHD) the chain is Extracellular. Asn828 carries N-linked (GlcNAc...) asparagine glycosylation. The pore-forming intramembrane region spans 844–864 (FFHSFLIVFRILCGEWIENMW). At 865 to 873 (ACMEVGQKS) the chain is on the extracellular side. Cysteines 866 and 875 form a disulfide. A helical membrane pass occupies residues 874–899 (ICLILFLTVMVLGNLVVLNLFTALLL). Residues 900–1154 (NSFSADNLAT…GWQVRKTCYR (255 aa)) are Cytoplasmic-facing. Positions 1015–1026 (LDDLEEDGEEDS) are enriched in acidic residues. Positions 1015-1035 (LDDLEEDGEEDSQSSQQEVIL) are disordered. One copy of the III repeat lies at 1147–1456 (QVRKTCYRIV…KKYYNAMKKL (310 aa)). The chain crosses the membrane as a helical span at residues 1155-1178 (IVEHSWFESFIIFMILLSSGSLAF). Over 1179-1191 (EDYHLDQKPTVKA) the chain is Extracellular. The chain crosses the membrane as a helical span at residues 1192-1217 (LLEYTDRMFTFIFVLEMLLKWVAYGF). Over 1218–1223 (KKYFTN) the chain is Cytoplasmic. A helical membrane pass occupies residues 1224–1245 (AWCWLDFLIVNISLISLIAKIL). Topologically, residues 1246–1249 (QYSD) are extracellular. Residues 1250 to 1271 (VASIKALRTLRALRPLRALSRF) form a helical; Voltage-sensor membrane-spanning segment. Topologically, residues 1272-1290 (EGMRVVVDALVGAIPSIMN) are cytoplasmic. A helical transmembrane segment spans residues 1291-1318 (VLLVCLIFWLIFSTMGVNFFAGKFGRCI). Asn1319, Asn1335, and Asn1343 each carry an N-linked (GlcNAc...) asparagine glycan. The Extracellular portion of the chain corresponds to 1319–1360 (NKTNEYFSLVPLSIVNNISDCKYQNHTGSFFWVNVKVNFDNV). The segment at residues 1361–1382 (AMGYLALLQVATFKGWMDIMYA) is an intramembrane region (pore-forming). At 1383–1398 (AVDARDVNLQPKWEDN) the chain is on the extracellular side. The chain crosses the membrane as a helical span at residues 1399–1425 (VYMYLYFVIFIIFGGFFTLNLFVGVII). The Cytoplasmic segment spans residues 1426 to 1478 (DNFNQQKKKLGGQDIFMTEEQKKYYNAMKKLGSKKPQKPIPRPLNKYQGFVFD). A Phosphoserine; by PKC modification is found at Ser1458. An IV repeat occupies 1465 to 1764 (IPRPLNKYQG…WEKFDPEATQ (300 aa)). A helical membrane pass occupies residues 1479 to 1502 (IVTKQAFDIVIMVLICLNMITMMV). Residues 1503-1513 (ETDEQSAEKTK) lie on the Extracellular side of the membrane. A helical membrane pass occupies residues 1514–1537 (ILNKINQFFVAVFTGECVMKMFAL). Residues 1538-1543 (RHYYFT) are Cytoplasmic-facing. The helical transmembrane segment at 1544–1567 (NGWNVFDFIVVVLSIGSLVFSVIL) threads the bilayer. Topologically, residues 1568-1579 (TSLENYFSPTLF) are extracellular. A helical; Voltage-sensor membrane pass occupies residues 1580–1601 (RVIRLARIGRILRLIRAAKGIR). At 1602–1616 (TLLFALMMSLPALFN) the chain is on the cytoplasmic side. A helical membrane pass occupies residues 1617–1639 (IGLLLFLVMFIYSIFGMASFPHV). The Extracellular portion of the chain corresponds to 1640 to 1653 (SWEAGIDDMFNFQT). Residues 1654 to 1676 (FANSMLCLFQITTSAGWDGLLSP) constitute an intramembrane region (pore-forming). Residues 1677–1704 (ILNTGPPYCDPNLPNSNGSRGNCGSPAV) lie on the Extracellular side of the membrane. N-linked (GlcNAc...) asparagine glycosylation is present at Asn1693. A helical transmembrane segment spans residues 1705 to 1729 (GILFFTTYIIISFLIVVNMYIAVIL). The Cytoplasmic portion of the chain corresponds to 1730 to 1962 (ENFNVATQES…TSKKVTAPGP (233 aa)). An IQ domain is found at 1858-1887 (EDISATVIQKAYRSYVLHRSMTISNPPAVP). The segment at 1914–1962 (KSETASAASFPPSYDSVTRGLSDQINMSTSSSMQNEDEGTSKKVTAPGP) is disordered. Residues 1928 to 1947 (DSVTRGLSDQINMSTSSSMQ) are compositionally biased toward polar residues.

It belongs to the sodium channel (TC 1.A.1.10) family. Nav1.8/SCN10A subfamily. In terms of assembly, the channel consists of an ion conducting pore forming alpha-subunit regulated by one or more associated auxiliary subunits SCN1B, SCN2B and SCN3B; electrophysiological properties may vary depending on the type of the associated beta subunits. Found in a number of complexes with PRX, DYNLT1 and PDZD2. Interacts with proteins such as FSTL1, PRX, DYNLT1, PDZD2, S100A10 and many others. Interacts with NEDD4 and NEDD4L. In terms of processing, ubiquitinated by NEDD4L; which promotes its endocytosis. Post-translationally, phosphorylation at Ser-1458 by PKC in a highly conserved cytoplasmic loop slows inactivation of the sodium channel and reduces peak sodium currents. Lacks the cysteine which covalently binds the conotoxin GVIIJ. This cysteine (position 825) is speculated in other sodium channel subunits alpha to be implied in covalent binding with the sodium channel subunit beta-2 or beta-4. As to expression, expressed in nodose ganglia, but not in cortex, hippocampus, cerebellum, liver, heart and skeletal muscle.

It localises to the cell membrane. The catalysed reaction is Na(+)(in) = Na(+)(out). Its function is as follows. Tetrodotoxin-resistant channel that mediates the voltage-dependent sodium ion permeability of excitable membranes. Assuming opened or closed conformations in response to the voltage difference across the membrane, the protein forms a sodium-selective channel through which sodium ions may pass in accordance with their electrochemical gradient. Plays a role in neuropathic pain mechanisms. The sequence is that of Sodium channel protein type 10 subunit alpha (SCN10A) from Canis lupus familiaris (Dog).